The following is a 339-amino-acid chain: 3-isopropylmalate dehydrogenase (339 aa).

The substrate site is built by Arg-88, Arg-98, Arg-122, and Asp-212. Mg(2+)-binding residues include Asp-212, Asp-236, and Asp-240. 272 to 284 (GSAPDIAGKGIAD) serves as a coordination point for NAD(+).

Belongs to the isocitrate and isopropylmalate dehydrogenases family. LeuB type 2 subfamily. In terms of assembly, homodimer. Mg(2+) serves as cofactor. It depends on Mn(2+) as a cofactor.

The protein resides in the cytoplasm. It carries out the reaction (2R,3S)-3-isopropylmalate + NAD(+) = 4-methyl-2-oxopentanoate + CO2 + NADH. It participates in amino-acid biosynthesis; L-leucine biosynthesis; L-leucine from 3-methyl-2-oxobutanoate: step 3/4. Its function is as follows. Catalyzes the oxidation of 3-carboxy-2-hydroxy-4-methylpentanoate (3-isopropylmalate) to 3-carboxy-4-methyl-2-oxopentanoate. The product decarboxylates to 4-methyl-2 oxopentanoate. The polypeptide is 3-isopropylmalate dehydrogenase (Corynebacterium aurimucosum (strain ATCC 700975 / DSM 44827 / CIP 107346 / CN-1) (Corynebacterium nigricans)).